The following is a 209-amino-acid chain: MIRSIFKKNSSLPYFLKRSFITKPHSIITPIINNNNHNNNNINTPIKNIQSFNFKFFTTTTTSNPIHQQTTTTTTTTPSTEQQQLSKEAEEINENITKYNITLTDSCVKELNSVQKKSDSTDIFLRVMVDMGGCSGYQYIIKVENKLQDDDVLFIRNGAKVIIDKISLEMMEGSIIDYETALMRSSFVVASNPNTIKSCGCKISFELKK.

The N-terminal 27 residues, 1–27, are a transit peptide targeting the mitochondrion; the sequence is MIRSIFKKNSSLPYFLKRSFITKPHSI. 3 residues coordinate Fe cation: Cys134, Cys199, and Cys201.

This sequence belongs to the HesB/IscA family. Fe cation serves as cofactor.

The protein resides in the mitochondrion. Involved in the maturation of mitochondrial 4Fe-4S proteins functioning late in the iron-sulfur cluster assembly pathway. May be involved in the binding of an intermediate of Fe/S cluster assembly. The sequence is that of Iron-sulfur cluster assembly 2 homolog, mitochondrial (isca2) from Dictyostelium discoideum (Social amoeba).